The sequence spans 361 residues: S-adenosylmethionine decarboxylase proenzyme (361 aa).

Catalysis depends on residues Glu13 and Glu16. Catalysis depends on Ser73, which acts as the Schiff-base intermediate with substrate; via pyruvic acid. The residue at position 73 (Ser73) is a Pyruvic acid (Ser); by autocatalysis. Cys87 (proton donor; for catalytic activity) is an active-site residue. Residues Ser236 and His249 each act as proton acceptor; for processing activity in the active site.

The protein belongs to the eukaryotic AdoMetDC family. The cofactor is pyruvate. Is synthesized initially as an inactive proenzyme. Formation of the active enzyme involves a self-maturation process in which the active site pyruvoyl group is generated from an internal serine residue via an autocatalytic post-translational modification. Two non-identical subunits are generated from the proenzyme in this reaction, and the pyruvate is formed at the N-terminus of the alpha chain, which is derived from the carboxyl end of the proenzyme. The post-translation cleavage follows an unusual pathway, termed non-hydrolytic serinolysis, in which the side chain hydroxyl group of the serine supplies its oxygen atom to form the C-terminus of the beta chain, while the remainder of the serine residue undergoes an oxidative deamination to produce ammonia and the pyruvoyl group blocking the N-terminus of the alpha chain.

The catalysed reaction is S-adenosyl-L-methionine + H(+) = S-adenosyl 3-(methylsulfanyl)propylamine + CO2. It participates in amine and polyamine biosynthesis; S-adenosylmethioninamine biosynthesis; S-adenosylmethioninamine from S-adenosyl-L-methionine: step 1/1. The polypeptide is S-adenosylmethionine decarboxylase proenzyme (SAMDC) (Nicotiana tabacum (Common tobacco)).